The chain runs to 898 residues: Tight junction protein ZO-3 (898 aa).

The region spanning 11–93 (TATLCRDPRR…LANITVKRPR (83 aa)) is the PDZ 1 domain. Residues 98–165 (PATKAGTSGR…SPGGNSEANG (68 aa)) are disordered. Residues serine 128, serine 156, serine 161, serine 195, and serine 313 each carry the phosphoserine modification. The region spanning 187–264 (SVLVRRTESE…KLTLLVLRDR (78 aa)) is the PDZ 2 domain. The segment at 295–368 (LSQAVPSHVP…QSAEDRGYSP (74 aa)) is disordered. Positions 312–349 (RSLDSDGTDSPRDSPPLRRENSLDSRTISEPDAPRHSS) are enriched in basic and acidic residues. Threonine 319 is modified (phosphothreonine). A phosphoserine mark is found at serine 321 and serine 360. A PDZ 3 domain is found at 369 to 435 (DSRVVRFHKG…LTREEAVQFL (67 aa)). Residues 464 to 538 (GDSFYIRTHF…PNQSRAEQLA (75 aa)) form the SH3 domain. The region spanning 569–750 (LRRGAKKSTQ…WYQELKAVVR (182 aa)) is the Guanylate kinase-like domain. Serine 580 carries the phosphoserine modification. The disordered stretch occupies residues 759–898 (TAEDQLDNSS…GYDWGPATDL (140 aa)). A compositionally biased stretch (acidic residues) spans 762 to 772 (DQLDNSSEDNL). Positions 780–790 (ADSSADLSCDS) are enriched in low complexity. Acidic residues predominate over residues 796 to 814 (YETDGEGYTDGEGYTDVDE). A compositionally biased stretch (basic and acidic residues) spans 831–841 (EEPRSPRDHGR). Serine 835, serine 884, and serine 885 each carry phosphoserine.

Belongs to the MAGUK family. In terms of assembly, heterodimer with TJP1. Interacts with UBN1. Interacts with occludin OCLN and claudins. Interacts with PATJ. Interacts with FASLG. Interacts with CCND1. Post-translationally, phosphorylated.

The protein resides in the cell membrane. It is found in the cell junction. Its subcellular location is the tight junction. The protein localises to the nucleus. Functionally, TJP1, TJP2, and TJP3 are closely related scaffolding proteins that link tight junction (TJ) transmembrane proteins such as claudins, junctional adhesion molecules, and occludin to the actin cytoskeleton. The tight junction acts to limit movement of substances through the paracellular space and as a boundary between the compositionally distinct apical and basolateral plasma membrane domains of epithelial and endothelial cells. Binds and recruits PATJ to tight junctions where it connects and stabilizes apical and lateral components of tight junctions. Promotes cell-cycle progression through the sequestration of cyclin D1 (CCND1) at tight junctions during mitosis which prevents CCND1 degradation during M-phase and enables S-phase transition. With TJP1 and TJP2, participates in the junctional retention and stability of the transcription factor DBPA, but is not involved in its shuttling to the nucleus. Contrary to TJP2, TJP3 is dispensable for individual viability, embryonic development, epithelial differentiation, and the establishment of TJs, at least in the laboratory environment. In Canis lupus familiaris (Dog), this protein is Tight junction protein ZO-3 (TJP3).